Consider the following 253-residue polypeptide: 5'/3'-nucleotidase SurE (253 aa).

A divalent metal cation-binding residues include aspartate 8, aspartate 9, serine 39, and asparagine 92.

This sequence belongs to the SurE nucleotidase family. The cofactor is a divalent metal cation.

The protein localises to the cytoplasm. It catalyses the reaction a ribonucleoside 5'-phosphate + H2O = a ribonucleoside + phosphate. The catalysed reaction is a ribonucleoside 3'-phosphate + H2O = a ribonucleoside + phosphate. The enzyme catalyses [phosphate](n) + H2O = [phosphate](n-1) + phosphate + H(+). In terms of biological role, nucleotidase with a broad substrate specificity as it can dephosphorylate various ribo- and deoxyribonucleoside 5'-monophosphates and ribonucleoside 3'-monophosphates with highest affinity to 3'-AMP. Also hydrolyzes polyphosphate (exopolyphosphatase activity) with the preference for short-chain-length substrates (P20-25). Might be involved in the regulation of dNTP and NTP pools, and in the turnover of 3'-mononucleotides produced by numerous intracellular RNases (T1, T2, and F) during the degradation of various RNAs. In Salmonella typhimurium (strain LT2 / SGSC1412 / ATCC 700720), this protein is 5'/3'-nucleotidase SurE.